Consider the following 278-residue polypeptide: HTH-type transcriptional activator RhaS (278 aa).

The 99-residue stretch at 174–272 (NQLMAWLEDH…NWSPRDIRQG (99 aa)) folds into the HTH araC/xylS-type domain. 2 DNA-binding regions (H-T-H motif) span residues 191–212 (EAVA…KQHT) and 239–262 (VTEI…RREF).

As to quaternary structure, binds DNA as a dimer.

It localises to the cytoplasm. Functionally, activates expression of the rhaBAD and rhaT operons. This is HTH-type transcriptional activator RhaS from Salmonella enteritidis PT4 (strain P125109).